Here is a 209-residue protein sequence, read N- to C-terminus: Probable peptide export ATP-binding protein YydI (209 aa).

An ABC transporter domain is found at 1–207; that stretch reads MNIANYTLKV…SVDKLIEVYI (207 aa). An ATP-binding site is contributed by 33–40; sequence GKNGVGKS.

It belongs to the ABC transporter superfamily. As to quaternary structure, the complex is composed of two ATP-binding proteins (YydI), two transmembrane proteins (YydJ).

Its function is as follows. Suggested to be part of an ABC transporter complex YydIJ involved in export of the modified peptide YydF. Responsible for energy coupling to the transport system. This is Probable peptide export ATP-binding protein YydI (yydI) from Bacillus subtilis (strain 168).